The chain runs to 1194 residues: Multidrug efflux ATP-binding/permease protein BCG_0231 (1194 aa).

The next 6 membrane-spanning stretches (helical) occupy residues 20-40, 56-76, 130-150, 153-173, 258-278, and 279-299; these read LLLG…VPLV, LAPW…LTYV, LLFD…GVAV, WLSV…GLIA, FALG…FVAF, and WACL…LTIA. One can recognise an ABC transmembrane type-1 1 domain in the interval 21-301; that stretch reads LLGFGAALAG…LAGMLTIAQQ (281 aa). Positions 334–568 constitute an ABC transporter 1 domain; sequence LEFQRVSFGY…CPRYRELLSP (235 aa). 367-374 contacts ATP; it reads GAPGSGKS. The next 6 membrane-spanning stretches (helical) occupy residues 628-648, 660-680, 743-763, 765-785, 847-867, and 878-898; these read ALSL…PLLI, VLSA…IRWV, LVVA…LLAI, ARLV…TWQF, LLAL…TLVL, and VISV…YTPI. Residues 628–910 form the ABC transmembrane type-1 2 domain; it reads ALSLLLVAVQ…LAQMFDDYQR (283 aa). Residues 942 to 1177 enclose the ABC transporter 2 domain; that stretch reads VVFDAVHYSY…GGHYSRLWAA (236 aa). 976-983 provides a ligand contact to ATP; it reads GSTGSGKS.

Belongs to the ABC transporter superfamily. Lipid exporter (TC 3.A.1.106) family.

It localises to the cell inner membrane. Overexpression increases resistance to chloramphenicol, ampicillin, streptomycin, tetracyclin and vancomycin. This is Multidrug efflux ATP-binding/permease protein BCG_0231 from Mycobacterium bovis (strain BCG / Pasteur 1173P2).